A 529-amino-acid polypeptide reads, in one-letter code: Bifunctional purine biosynthesis protein PurH (529 aa).

The MGS-like domain occupies 1-146; it reads MAPTALLSVS…KNHAHVAVLT (146 aa).

Belongs to the PurH family.

It carries out the reaction (6R)-10-formyltetrahydrofolate + 5-amino-1-(5-phospho-beta-D-ribosyl)imidazole-4-carboxamide = 5-formamido-1-(5-phospho-D-ribosyl)imidazole-4-carboxamide + (6S)-5,6,7,8-tetrahydrofolate. The catalysed reaction is IMP + H2O = 5-formamido-1-(5-phospho-D-ribosyl)imidazole-4-carboxamide. Its pathway is purine metabolism; IMP biosynthesis via de novo pathway; 5-formamido-1-(5-phospho-D-ribosyl)imidazole-4-carboxamide from 5-amino-1-(5-phospho-D-ribosyl)imidazole-4-carboxamide (10-formyl THF route): step 1/1. It functions in the pathway purine metabolism; IMP biosynthesis via de novo pathway; IMP from 5-formamido-1-(5-phospho-D-ribosyl)imidazole-4-carboxamide: step 1/1. The polypeptide is Bifunctional purine biosynthesis protein PurH (Synechococcus sp. (strain CC9311)).